Reading from the N-terminus, the 53-residue chain is UPF0391 membrane protein Bxeno_A1464 (53 aa).

A run of 2 helical transmembrane segments spans residues 5-25 and 30-50; these read AAIF…GIAA and IAKV…LMGV.

The protein belongs to the UPF0391 family.

The protein localises to the cell membrane. The polypeptide is UPF0391 membrane protein Bxeno_A1464 (Paraburkholderia xenovorans (strain LB400)).